A 240-amino-acid chain; its full sequence is Ribonuclease T2 (240 aa).

A signal peptide spans Met-1–Ala-19. Cys-41 and Cys-46 are oxidised to a cystine. The active site involves His-56. Intrachain disulfides connect Cys-66-Cys-110, Cys-173-Cys-227, and Cys-191-Cys-201. Residues Asn-67 and Asn-73 are each glycosylated (N-linked (GlcNAc...) asparagine). Residues Glu-103 and His-107 contribute to the active site.

It belongs to the RNase T2 family. As to expression, ubiquitous.

It localises to the lysosome lumen. The protein localises to the endoplasmic reticulum lumen. Its subcellular location is the secreted. The enzyme catalyses a ribonucleotidyl-ribonucleotide-RNA + H2O = a 3'-end 3'-phospho-ribonucleotide-RNA + a 5'-end dephospho-ribonucleoside-RNA + H(+). In terms of biological role, has ribonuclease activity, with higher activity at acidic pH. Probably is involved in lysosomal degradation of ribosomal RNA. The sequence is that of Ribonuclease T2 (rnaset2) from Danio rerio (Zebrafish).